A 308-amino-acid polypeptide reads, in one-letter code: Olfactory receptor 5H19 (308 aa).

The Extracellular segment spans residues 1 to 27 (MEKNATLLTEFVLTGLSHQPLWNIPLF). Asparagine 4 is a glycosylation site (N-linked (GlcNAc...) asparagine). Residues 28–48 (LVFLVIYLITIVGNVSLITLI) traverse the membrane as a helical segment. Over 49-55 (WTDPHLH) the chain is Cytoplasmic. The chain crosses the membrane as a helical span at residues 56-76 (IPMYLFLGSLAFVDTSISSIV). The Extracellular portion of the chain corresponds to 77–92 (VPKMLLNFFGKSKVIT). The helical transmembrane segment at 93–113 (LSECMAQFFLFNISATTECFL) threads the bilayer. Cysteine 96 and cysteine 188 are oxidised to a cystine. At 114 to 143 (LAAMAYDRYVAICKPLLYPVVMTNGLCVWL) the chain is on the cytoplasmic side. Residues 144 to 164 (IALSFVAGIIHALIHEGFLLR) traverse the membrane as a helical segment. The Extracellular segment spans residues 165–197 (LTFCNSNMIHNFYCDIISLLKISCTDTSLNYLI). Residues 198–218 (VFIFSGSIQVFTISTILVSYT) traverse the membrane as a helical segment. The Cytoplasmic segment spans residues 219–238 (IILFTILKKKSAKGIKKAFS). The chain crosses the membrane as a helical span at residues 239–259 (TCGAHLLSVSLYYGPLLFMYV). Residues 260–270 (HPASSEVDDQD) lie on the Extracellular side of the membrane. Residues 271-291 (MIDSLFYTVIIPVLNPIIYSL) traverse the membrane as a helical segment. At 292-308 (RNKQVIDSLAKFLKRNV) the chain is on the cytoplasmic side.

This sequence belongs to the G-protein coupled receptor 1 family.

It localises to the cell membrane. Functionally, potential odorant receptor. This is Olfactory receptor 5H19 from Mus musculus (Mouse).